Consider the following 264-residue polypeptide: Probable DNA polymerase sliding clamp 2 (264 aa).

A DNA-binding region spans residues 75 to 94 (SIAQEATVGIKISNFVRILD).

The protein belongs to the PCNA family.

Its function is as follows. Sliding clamp subunit. Responsible for tethering the catalytic subunit of DNA polymerase to DNA during high-speed replication. This chain is Probable DNA polymerase sliding clamp 2, found in Paramecium bursaria Chlorella virus 1 (PBCV-1).